Here is a 373-residue protein sequence, read N- to C-terminus: Enoyl-[acyl-carrier-protein] reductase, mitochondrial (373 aa).

The transit peptide at 1–53 (MWVCGALCRTRAPAQLGQRLLPESRRRRPASASFSASAEPSRVRALVYGHHGD) directs the protein to the mitochondrion. Position 61 is an N6-acetyllysine; alternate (K61). Residue K61 is modified to N6-succinyllysine; alternate. The active-site Proton donor is Y94. Residues N167, 193–196 (NSGV), and 216–218 (RDT) contribute to the NADP(+) site. 2 positions are modified to N6-acetyllysine; alternate: K252 and K267. N6-succinyllysine; alternate is present on residues K252 and K267. Residues 285 to 288 (YGGM) and 310 to 312 (FWL) contribute to the NADP(+) site. Position 316 is an N6-succinyllysine (K316). Residue K368 coordinates NADP(+).

This sequence belongs to the zinc-containing alcohol dehydrogenase family. Quinone oxidoreductase subfamily. In terms of assembly, homodimer.

The protein localises to the mitochondrion. It catalyses the reaction a 2,3-saturated acyl-[ACP] + NADP(+) = a (2E)-enoyl-[ACP] + NADPH + H(+). The catalysed reaction is (2E)-butenoyl-[ACP] + NADPH + H(+) = butanoyl-[ACP] + NADP(+). It carries out the reaction (2E)-hexenoyl-[ACP] + NADPH + H(+) = hexanoyl-[ACP] + NADP(+). The enzyme catalyses (2E)-octenoyl-[ACP] + NADPH + H(+) = octanoyl-[ACP] + NADP(+). It catalyses the reaction (2E)-decenoyl-[ACP] + NADPH + H(+) = decanoyl-[ACP] + NADP(+). The catalysed reaction is (2E)-dodecenoyl-[ACP] + NADPH + H(+) = dodecanoyl-[ACP] + NADP(+). It carries out the reaction (2E)-tetradecenoyl-[ACP] + NADPH + H(+) = tetradecanoyl-[ACP] + NADP(+). The enzyme catalyses (2E)-hexadecenoyl-[ACP] + NADPH + H(+) = hexadecanoyl-[ACP] + NADP(+). Catalyzes the NADPH-dependent reduction of trans-2-enoyl thioesters in mitochondrial fatty acid synthesis (fatty acid synthesis type II). Fatty acid chain elongation in mitochondria uses acyl carrier protein (ACP) as an acyl group carrier, but the enzyme accepts both ACP and CoA thioesters as substrates in vitro. Displays a preference for medium-chain over short- and long-chain substrates. May provide the octanoyl chain used for lipoic acid biosynthesis, regulating protein lipoylation and mitochondrial respiratory activity particularly in Purkinje cells. Involved in iron homeostasis; affecting Fe-S cluster assembly and ceramide metabolism. Required for proper morphology and bioenergetic functions of mitochondria. Required for maintenance of neurons. The polypeptide is Enoyl-[acyl-carrier-protein] reductase, mitochondrial (MECR) (Bos taurus (Bovine)).